The primary structure comprises 787 residues: Vacuolar protein sorting-associated protein 35A (787 aa).

N-acetylmethionine is present on Met1.

This sequence belongs to the VPS35 family. Component of the retromer complex which consists of VPS29 (MAG1), VPS26 (VPS26A or VPS26B), VPS35 (VPS35A or VPS35B or VPS35C), VPS5/17 (SNX1 or SNX2A or SNX2B). Component of a retromer subcomplex consisting of VPS29 (MAG1), VPS26 (VPS26A or VPS26B), VPS35 (VPS35A or VPS35B or VPS35C). Interacts with RABG3F.

Its subcellular location is the cytoplasm. It localises to the endosome membrane. It is found in the prevacuolar compartment membrane. The protein resides in the golgi apparatus. The protein localises to the trans-Golgi network membrane. Functionally, plays a role in vesicular protein sorting. Component of the membrane-associated retromer complex which is essential in endosome-to-Golgi retrograde transport. Also involved in the efficient sorting of seed storage proteins. Binds alone to endosomal membranes and is required for recruitment of VPS26 and VPS29 to membrane. The VPS29-VPS26-VPS35 subcomplex may be involved in recycling of specific cargos from endosome to the plasma membrane. This is Vacuolar protein sorting-associated protein 35A (VPS35A) from Arabidopsis thaliana (Mouse-ear cress).